We begin with the raw amino-acid sequence, 422 residues long: Probable protein phosphatase 2C 43 (422 aa).

Residues 117 to 393 (SSGSYADKGD…DNVTVVVICF (277 aa)) enclose the PPM-type phosphatase domain. Mn(2+)-binding residues include aspartate 163, glycine 164, aspartate 341, and aspartate 384.

This sequence belongs to the PP2C family. Requires Mg(2+) as cofactor. Mn(2+) is required as a cofactor.

The enzyme catalyses O-phospho-L-seryl-[protein] + H2O = L-seryl-[protein] + phosphate. The catalysed reaction is O-phospho-L-threonyl-[protein] + H2O = L-threonyl-[protein] + phosphate. In Arabidopsis thaliana (Mouse-ear cress), this protein is Probable protein phosphatase 2C 43.